Here is a 405-residue protein sequence, read N- to C-terminus: Serine--glyoxylate aminotransferase (405 aa).

N6-(pyridoxal phosphate)lysine is present on K196.

It belongs to the class-V pyridoxal-phosphate-dependent aminotransferase family. Requires pyridoxal 5'-phosphate as cofactor.

The catalysed reaction is glyoxylate + L-serine = 3-hydroxypyruvate + glycine. It functions in the pathway one-carbon metabolism; formaldehyde assimilation via serine pathway. In Hyphomicrobium methylovorum, this protein is Serine--glyoxylate aminotransferase (sgaA).